Here is a 476-residue protein sequence, read N- to C-terminus: ATP synthase subunit beta, chloroplastic (476 aa).

ATP is bound at residue 155-162 (GGAGVGKT).

Belongs to the ATPase alpha/beta chains family. In terms of assembly, F-type ATPases have 2 components, CF(1) - the catalytic core - and CF(0) - the membrane proton channel. CF(1) has five subunits: alpha(3), beta(3), gamma(1), delta(1), epsilon(1). CF(0) has four main subunits: a(1), b(1), b'(1) and c(9-12).

The protein resides in the plastid. It localises to the chloroplast thylakoid membrane. It catalyses the reaction ATP + H2O + 4 H(+)(in) = ADP + phosphate + 5 H(+)(out). Functionally, produces ATP from ADP in the presence of a proton gradient across the membrane. The catalytic sites are hosted primarily by the beta subunits. The chain is ATP synthase subunit beta, chloroplastic from Emiliania huxleyi (Coccolithophore).